Reading from the N-terminus, the 343-residue chain is Holliday junction branch migration complex subunit RuvB (343 aa).

The interval 4–184 (SDRLISAKAG…FGIVQRLEFY (181 aa)) is large ATPase domain (RuvB-L). ATP-binding positions include Ile-23, Arg-24, Gly-65, Lys-68, Thr-69, Thr-70, 131 to 133 (EDY), Arg-174, Tyr-184, and Arg-221. Position 69 (Thr-69) interacts with Mg(2+). Residues 185 to 255 (NHQDLTHIIT…IADQALNMLK (71 aa)) form a small ATPAse domain (RuvB-S) region. Residues 258 to 343 (SQGFDHMDRR…RSGREDDLFE (86 aa)) are head domain (RuvB-H). Positions 294, 313, and 318 each coordinate DNA.

This sequence belongs to the RuvB family. In terms of assembly, homohexamer. Forms an RuvA(8)-RuvB(12)-Holliday junction (HJ) complex. HJ DNA is sandwiched between 2 RuvA tetramers; dsDNA enters through RuvA and exits via RuvB. An RuvB hexamer assembles on each DNA strand where it exits the tetramer. Each RuvB hexamer is contacted by two RuvA subunits (via domain III) on 2 adjacent RuvB subunits; this complex drives branch migration. In the full resolvosome a probable DNA-RuvA(4)-RuvB(12)-RuvC(2) complex forms which resolves the HJ.

The protein localises to the cytoplasm. The enzyme catalyses ATP + H2O = ADP + phosphate + H(+). In terms of biological role, the RuvA-RuvB-RuvC complex processes Holliday junction (HJ) DNA during genetic recombination and DNA repair, while the RuvA-RuvB complex plays an important role in the rescue of blocked DNA replication forks via replication fork reversal (RFR). RuvA specifically binds to HJ cruciform DNA, conferring on it an open structure. The RuvB hexamer acts as an ATP-dependent pump, pulling dsDNA into and through the RuvAB complex. RuvB forms 2 homohexamers on either side of HJ DNA bound by 1 or 2 RuvA tetramers; 4 subunits per hexamer contact DNA at a time. Coordinated motions by a converter formed by DNA-disengaged RuvB subunits stimulates ATP hydrolysis and nucleotide exchange. Immobilization of the converter enables RuvB to convert the ATP-contained energy into a lever motion, pulling 2 nucleotides of DNA out of the RuvA tetramer per ATP hydrolyzed, thus driving DNA branch migration. The RuvB motors rotate together with the DNA substrate, which together with the progressing nucleotide cycle form the mechanistic basis for DNA recombination by continuous HJ branch migration. Branch migration allows RuvC to scan DNA until it finds its consensus sequence, where it cleaves and resolves cruciform DNA. The chain is Holliday junction branch migration complex subunit RuvB from Marinobacter nauticus (strain ATCC 700491 / DSM 11845 / VT8) (Marinobacter aquaeolei).